The following is a 570-amino-acid chain: Double-stranded RNA-binding protein Staufen homolog 2 (570 aa).

In terms of domain architecture, DRBM 1 spans T8–L75. 2 disordered regions span residues T71 to I94 and A178 to D203. The span at P83–I94 shows a compositional bias: polar residues. One can recognise a DRBM 2 domain in the interval T95 to N181. S188 is subject to Phosphoserine. A compositionally biased stretch (basic and acidic residues) spans S194–D203. DRBM domains are found at residues S207–K274 and N307–Y375. Short sequence motifs (nuclear localization signal) lie at residues K273 to R291 and L373 to I412. Residues L381–L413 form a disordered region. The tract at residues L381–I570 is required for dendritic transport. The residue at position 395 (S395) is a Phosphoserine. At T405 the chain carries Phosphothreonine. S416, S426, S440, S455, and S492 each carry phosphoserine. The interval L545–I570 is disordered. The span at N551–Q561 shows a compositional bias: polar residues.

In terms of assembly, interacts with microtubules. Isoform 2 and isoform 3 may also interact with ribosomes, and this association is independent of translation. Identified in a mRNP complex, at least composed of DHX9, DDX3X, ELAVL1, HNRNPU, IGF2BP1, ILF3, PABPC1, PCBP2, PTBP2, STAU1, STAU2, SYNCRIP and YBX1. Interacts with the exportin XPO5. This requires RNA and RAN bound to GTP. Interacts with TRIM71 (via NHL repeats) in an RNA-dependent manner. Expressed in brain and neurons, where isoform 2 and isoform 3 appear to be the most abundant. Expressed at the neuromuscular junction of the extensor digitorum longus, tibialis anterior and soleus muscles. Expression at neuromuscular junctions is most pronounced in slow-twitch muscle. Also weakly expressed in heart, kidney, ovary and testis.

It is found in the cytoplasm. The protein resides in the nucleus. The protein localises to the nucleolus. It localises to the endoplasmic reticulum. Functionally, RNA-binding protein required for the microtubule-dependent transport of neuronal RNA from the cell body to the dendrite. As protein synthesis occurs within the dendrite, the localization of specific mRNAs to dendrites may be a prerequisite for neurite outgrowth and plasticity at sites distant from the cell body. This chain is Double-stranded RNA-binding protein Staufen homolog 2 (Stau2), found in Mus musculus (Mouse).